A 231-amino-acid polypeptide reads, in one-letter code: MAKLTKKQKALQGKVDSTKLYAFADAVVLVKEAATAKFDESIDVAVQLGIDAKKSDQVVRGAVVLPNGTGKTTRVAVFAQGAKAEEAKAAGADVVGMDDLAAQVKAGDMPFDVVIAAPDAMRVVGTLGQILGPRGLMPNPKVGTVTPDVATAVKNAKAGQVQFRVDKAGIIHSTIGRRSFDNDKLQGNLVALIEALNKAKPATSKGLYLRKVAVSSTMGVGVRVDTQSISA.

Belongs to the universal ribosomal protein uL1 family. In terms of assembly, part of the 50S ribosomal subunit.

Binds directly to 23S rRNA. The L1 stalk is quite mobile in the ribosome, and is involved in E site tRNA release. Its function is as follows. Protein L1 is also a translational repressor protein, it controls the translation of the L11 operon by binding to its mRNA. The protein is Large ribosomal subunit protein uL1 of Paracidovorax citrulli (strain AAC00-1) (Acidovorax citrulli).